Reading from the N-terminus, the 294-residue chain is Homoserine kinase (294 aa).

An ATP-binding site is contributed by 83-93; sequence PLARGLGSSAS.

This sequence belongs to the GHMP kinase family. Homoserine kinase subfamily.

The protein resides in the cytoplasm. The enzyme catalyses L-homoserine + ATP = O-phospho-L-homoserine + ADP + H(+). The protein operates within amino-acid biosynthesis; L-threonine biosynthesis; L-threonine from L-aspartate: step 4/5. Functionally, catalyzes the ATP-dependent phosphorylation of L-homoserine to L-homoserine phosphate. This chain is Homoserine kinase, found in Oceanobacillus iheyensis (strain DSM 14371 / CIP 107618 / JCM 11309 / KCTC 3954 / HTE831).